The sequence spans 484 residues: UDP-N-acetylmuramate--L-alanine ligase (484 aa).

An ATP-binding site is contributed by 126 to 132 (GTHGKTT).

The protein belongs to the MurCDEF family.

It localises to the cytoplasm. The enzyme catalyses UDP-N-acetyl-alpha-D-muramate + L-alanine + ATP = UDP-N-acetyl-alpha-D-muramoyl-L-alanine + ADP + phosphate + H(+). Its pathway is cell wall biogenesis; peptidoglycan biosynthesis. Cell wall formation. The chain is UDP-N-acetylmuramate--L-alanine ligase from Tolumonas auensis (strain DSM 9187 / NBRC 110442 / TA 4).